The sequence spans 71 residues: Large ribosomal subunit protein uL30 (71 aa).

It belongs to the universal ribosomal protein uL30 family. Part of the 50S ribosomal subunit.

The chain is Large ribosomal subunit protein uL30 from Mycobacterium leprae (strain TN).